A 536-amino-acid polypeptide reads, in one-letter code: Octopamine receptor beta-2R (536 aa).

The segment at 1–26 (MLLCDGLGPEPPRQRHRNRTSAARIR) is disordered. Topologically, residues 1-157 (MLLCDGLGPE…LDNIVWVFKA (157 aa)) are extracellular. The span at 14 to 26 (QRHRNRTSAARIR) shows a compositional bias: basic residues. Residues N18, N92, N113, and N126 are each glycosylated (N-linked (GlcNAc...) asparagine). A helical transmembrane segment spans residues 158 to 178 (FVMLLIIIAAICGNLLVIISV). Residues 179-190 (MRVRKLRVITNY) are Cytoplasmic-facing. The helical transmembrane segment at 191–211 (FVVSLAMADIMVAIMAMTFNF) threads the bilayer. The Extracellular segment spans residues 212 to 233 (SVQVTGRWNFSPFLCDLWNSLD). A helical transmembrane segment spans residues 234 to 256 (VYFSTASILHLCCISVDRYYAIV). Topologically, residues 257-270 (KPLKYPISMTKRVV) are cytoplasmic. The chain crosses the membrane as a helical span at residues 271 to 291 (GIMLLNTWISPALLSFLPIFI). Topologically, residues 292-320 (GWYTTPQHQQFVIQNPTQCSFVVNKYYAV) are extracellular. A helical membrane pass occupies residues 321 to 341 (ISSSISFWIPCTIMIFTYLAI). Residues 342-412 (FREANRQEKQ…MKREHKAART (71 aa)) are Cytoplasmic-facing. Residues 413 to 433 (LGIIMGTFILCWLPFFLWYTL) form a helical membrane-spanning segment. Residues 434–444 (SMTCEECQVPD) lie on the Extracellular side of the membrane. A helical membrane pass occupies residues 445 to 465 (IVVSILFWIGYFNSTLNPLIY). Over 466 to 536 (AYFNRDFREA…RRQSQMVDNL (71 aa)) the chain is Cytoplasmic.

The protein belongs to the G-protein coupled receptor 1 family. As to expression, in the adult, expressed in the superior protocerebrum and the optic lobe medulla of the central nervous system, nurse cells of egg chambers in the ovary at oogenic stages 1-10, and spermatogonia and spermatocytes in the testis. Expressed in the oviduct epithelium. Also expressed in the spermatheca. Expressed in embryonic and larval ventral nerve cord and brain lobe, embryonic and larval salivary glands and larval imaginal disk and midgut. Also expressed in larval synaptic boutons.

It localises to the cell membrane. In terms of biological role, autoreceptor for octopamine (OA), which is a neurotransmitter, neurohormone, and neuromodulator in invertebrates. Essential for ovulation and fertilization. During ovulation it mediates the OA-induced relaxation of the oviduct visceral muscles, by increasing cAMP levels and activating effectors such as calmodulin-dependent kinase II (CaMKII) and cAMP-dependent protein kinase A (PKA) pathways. Positively regulates synaptic growth; an action that is antagonized by Octbeta1R. The sequence is that of Octopamine receptor beta-2R from Drosophila melanogaster (Fruit fly).